A 368-amino-acid chain; its full sequence is MTVKLTIDCMGGDHGPSVTVPAAVKFVRAHPDAHLMLVGIESAIRAQLKKLKALDDPALSIVPATEVVAMDDPVEVALRKKKDSSMRVALNHVKDGEAQACISAGNTGALMAVSRYVLKTLPGIERPAIAFSLPNPTGYTMMLDLGANVDCEPQHLLQFAEMGHALVAALEGKDRPTIGLLNIGEEVIKGNETIKRAGELLRASTLNFRGNVEGNDIYKGTVDVIVCDGFVGNVALKTSEGLAQMLSDIIREEFGRSLLSKLMALLALPVLMRFKKRVDHRQYNGAALLGLKSLVIKSHGSADAYAFEWAIKRGYDAVKNGVLERLTRAMADNSVSLGDGEHDAGGAGPASPAAGHHAEPSAAQSSKA.

Residues Val335–Ala368 are disordered. Low complexity predominate over residues Pro349 to Ala368.

This sequence belongs to the PlsX family. Homodimer. Probably interacts with PlsY.

The protein localises to the cytoplasm. The enzyme catalyses a fatty acyl-[ACP] + phosphate = an acyl phosphate + holo-[ACP]. It participates in lipid metabolism; phospholipid metabolism. Its function is as follows. Catalyzes the reversible formation of acyl-phosphate (acyl-PO(4)) from acyl-[acyl-carrier-protein] (acyl-ACP). This enzyme utilizes acyl-ACP as fatty acyl donor, but not acyl-CoA. The protein is Phosphate acyltransferase of Burkholderia multivorans (strain ATCC 17616 / 249).